A 464-amino-acid chain; its full sequence is Soluble pyridine nucleotide transhydrogenase (464 aa).

35–44 is an FAD binding site; sequence DNRPLVGGNC.

It belongs to the class-I pyridine nucleotide-disulfide oxidoreductase family. FAD is required as a cofactor.

The protein localises to the cytoplasm. The enzyme catalyses NAD(+) + NADPH = NADH + NADP(+). In terms of biological role, conversion of NADPH, generated by peripheral catabolic pathways, to NADH, which can enter the respiratory chain for energy generation. The chain is Soluble pyridine nucleotide transhydrogenase from Stutzerimonas stutzeri (strain A1501) (Pseudomonas stutzeri).